A 208-amino-acid chain; its full sequence is Large ribosomal subunit protein uL3 (208 aa).

Residue Gln-150 is modified to N5-methylglutamine.

The protein belongs to the universal ribosomal protein uL3 family. As to quaternary structure, part of the 50S ribosomal subunit. Forms a cluster with proteins L14 and L19. In terms of processing, methylated by PrmB.

Functionally, one of the primary rRNA binding proteins, it binds directly near the 3'-end of the 23S rRNA, where it nucleates assembly of the 50S subunit. This chain is Large ribosomal subunit protein uL3, found in Buchnera aphidicola subsp. Cinara cedri (strain Cc).